Consider the following 198-residue polypeptide: CXXC-type zinc finger protein 4 (198 aa).

The segment at 114–134 is disordered; the sequence is NHSSSSSSSSGGAGGANPAKK. The CXXC-type zinc-finger motif lies at 132–173; it reads AKKKRKRCGVCVPCKRLINCGVCSSCRNRKTGHQICKFRKCE. Residues Cys139, Cys142, Cys145, Cys151, Cys154, and Cys157 each contribute to the Zn(2+) site. Residues 161–166 form an interaction with DVL1 region; the sequence is KTGHQI. Zn(2+)-binding residues include Cys167 and Cys172.

Interacts with the PDZ domain of DVL1.

It is found in the cytoplasm. Its function is as follows. Acts as a negative regulator of the Wnt signaling pathway via its interaction with DVL1. Binds preferentially to DNA containing cytidine-phosphate-guanosine (CpG) dinucleotides over CpH (H=A, T, and C), hemimethylated-CpG and hemimethylated-hydroxymethyl-CpG. The sequence is that of CXXC-type zinc finger protein 4 (CXXC4) from Homo sapiens (Human).